The chain runs to 525 residues: Glycoprotein (525 aa).

The signal sequence occupies residues 1-17 (MASYFALVLNGISMVFS). The Virion surface portion of the chain corresponds to 18–459 (QGLFPLYTIP…DLGLSDWKRY (442 aa)). Residues Asn221 and Asn338 are each glycosylated (N-linked (GlcNAc...) asparagine; by host). The chain crosses the membrane as a helical span at residues 460 to 480 (LLIGSLAVGGVVAILFIGTCC). The S-palmitoyl cysteine; by host moiety is linked to residue Cys480. The Intravirion portion of the chain corresponds to 481-525 (LRCRAGRNRRTIRSNHRSLSHDVVFHKDKDKVITSWESYKGQTAQ).

This sequence belongs to the lyssavirus glycoprotein family. As to quaternary structure, homotrimer. Interacts with matrix protein. In terms of processing, glycosylated and palmitoylated by host. Glycosylation is crucial for glycoprotein export at the cell surface.

The protein localises to the virion membrane. Its function is as follows. Attaches the virus to host cellular receptor, inducing endocytosis of the virion. In the endosome, the acidic pH induces conformational changes in the glycoprotein trimer, which trigger fusion between virus and cell membrane. There is convincing in vitro evidence that the muscular form of the nicotinic acetylcholine receptor (nAChR), the neuronal cell adhesion molecule (NCAM), and the p75 neurotrophin receptor (p75NTR) bind glycoprotein and thereby facilitate rabies virus entry into cells. In Miniopterus schreibersii (Schreibers's long-fingered bat), this protein is Glycoprotein (G).